The following is a 432-amino-acid chain: Myb family transcription factor EFM (432 aa).

A coiled-coil region spans residues 36 to 81 (LEDLLSRLEQERLKIDAFKRELPLCMQLLNNAVEVYKQQLEAYRAN). Polar residues-rich tracts occupy residues 123–139 (SQSE…TDQS) and 187–197 (SPTNEHTNGQD). A disordered region spans residues 123–237 (SQSETKPKNI…SQSNRKARRC (115 aa)). The segment covering 201–231 (ESMINNDNNYNNNNNNNSNSNGVSSTTSQSN) has biased composition (low complexity). Residues 230–290 (SNRKARRCWS…HLQKYRLHTR (61 aa)) enclose the HTH myb-type domain. Positions 261–286 (PKQIRELMKVDGLTNDEVKSHLQKYR) form a DNA-binding region, H-T-H motif. A disordered region spans residues 354–412 (FYTTPPPPQPLHHHHFQTFNGSSGGTASTDSTHHQVTDSPTVEGKSPESGGGERKGLAA).

Interacts with JMJ30, but not with SVP, FLC or CO. In terms of tissue distribution, specifically expressed in vascular tissues of cotyledons, rosette leaves and cauline leaves. Not detected in the vegetative shoot apical meristem.

Its subcellular location is the nucleus. In terms of biological role, transcription factor acting as a flowering repressor, directly repressing FT expression in a dosage-dependent manner in the leaf vasculature. The sequence is that of Myb family transcription factor EFM from Arabidopsis thaliana (Mouse-ear cress).